We begin with the raw amino-acid sequence, 186 residues long: Large ribosomal subunit protein uL5 (186 aa).

This sequence belongs to the universal ribosomal protein uL5 family. In terms of assembly, part of the 50S ribosomal subunit; part of the 5S rRNA/L5/L18/L25 subcomplex. Contacts the 5S rRNA and the P site tRNA. Forms a bridge to the 30S subunit in the 70S ribosome.

Its function is as follows. This is one of the proteins that bind and probably mediate the attachment of the 5S RNA into the large ribosomal subunit, where it forms part of the central protuberance. In the 70S ribosome it contacts protein S13 of the 30S subunit (bridge B1b), connecting the 2 subunits; this bridge is implicated in subunit movement. Contacts the P site tRNA; the 5S rRNA and some of its associated proteins might help stabilize positioning of ribosome-bound tRNAs. The protein is Large ribosomal subunit protein uL5 of Cereibacter sphaeroides (strain ATCC 17023 / DSM 158 / JCM 6121 / CCUG 31486 / LMG 2827 / NBRC 12203 / NCIMB 8253 / ATH 2.4.1.) (Rhodobacter sphaeroides).